The chain runs to 239 residues: Diablo IAP-binding mitochondrial protein (239 aa).

A mitochondrion-targeting transit peptide spans 1 to 21 (MAALKSWLSRSVTSFFRYRQC). Positions 56 to 60 (AVPIA) match the IAP-binding motif. Residues 217–239 (RQKTQEEGEERAESEQEAYLRED) are disordered.

It belongs to the Smac/DIABLO protein family. As to quaternary structure, homodimer. Interacts with BIRC2/c-IAP1 (via BIR3 domain). Interacts with BIRC6/BRUCE; inhibits BIRC6 activity. Interacts with BIRC7/livin. Interacts with XIAP/BIRC4 (via BIR3 domain). Interacts with the monomeric and dimeric form of BIRC5/survivin. Interacts with AREL1 (via HECT domain); in the cytoplasm following induction of apoptosis. Interacts with BEX3. In terms of processing, ubiquitinated by BIRC7/livin. Ubiquitinated by BIRC6. Post-translationally, the precursor form is proteolytically cleaved by mitochondrial processing peptidase MPP to remove the transit peptide and produce an intermediate form. This is then processed by PARL to produce the mature cleaved form which is released from mitochondria into the cytosol in apoptotic cells. As to expression, ubiquitously expressed with highest expression in testis. Expression is also high in heart, liver, kidney, spleen, prostate and ovary. Low in brain, lung, thymus and peripheral blood leukocytes. Isoform 3 is ubiquitously expressed.

It is found in the mitochondrion. The protein localises to the cytoplasm. Its subcellular location is the cytosol. Promotes apoptosis by activating caspases in the cytochrome c/Apaf-1/caspase-9 pathway. Acts by opposing the inhibitory activity of inhibitor of apoptosis proteins (IAP). Inhibits the activity of BIRC6/BRUCE by inhibiting its binding to caspases. Its function is as follows. Attenuates the stability and apoptosis-inhibiting activity of XIAP/BIRC4 by promoting XIAP/BIRC4 ubiquitination and degradation through the ubiquitin-proteasome pathway. Also disrupts XIAP/BIRC4 interacting with processed caspase-9 and promotes caspase-3 activation. In terms of biological role, defective in the capacity to down-regulate the XIAP/BIRC4 abundance. This is Diablo IAP-binding mitochondrial protein from Homo sapiens (Human).